Consider the following 276-residue polypeptide: 2-dehydro-3-deoxyphosphooctonate aldolase (276 aa).

Belongs to the KdsA family.

Its subcellular location is the cytoplasm. It carries out the reaction D-arabinose 5-phosphate + phosphoenolpyruvate + H2O = 3-deoxy-alpha-D-manno-2-octulosonate-8-phosphate + phosphate. It participates in carbohydrate biosynthesis; 3-deoxy-D-manno-octulosonate biosynthesis; 3-deoxy-D-manno-octulosonate from D-ribulose 5-phosphate: step 2/3. Its pathway is bacterial outer membrane biogenesis; lipopolysaccharide biosynthesis. The chain is 2-dehydro-3-deoxyphosphooctonate aldolase from Xanthomonas campestris pv. campestris (strain 8004).